Reading from the N-terminus, the 119-residue chain is Large ribosomal subunit protein bL20 (119 aa).

It belongs to the bacterial ribosomal protein bL20 family.

Its function is as follows. Binds directly to 23S ribosomal RNA and is necessary for the in vitro assembly process of the 50S ribosomal subunit. It is not involved in the protein synthesizing functions of that subunit. In Stenotrophomonas maltophilia (strain R551-3), this protein is Large ribosomal subunit protein bL20.